A 504-amino-acid polypeptide reads, in one-letter code: Glycerol kinase (504 aa).

Thr-14 lines the ADP pocket. Thr-14, Thr-15, and Ser-16 together coordinate ATP. Thr-14 lines the sn-glycerol 3-phosphate pocket. Arg-18 is an ADP binding site. Residues Arg-84, Glu-85, Tyr-136, and Asp-246 each contribute to the sn-glycerol 3-phosphate site. Glycerol is bound by residues Arg-84, Glu-85, Tyr-136, Asp-246, and Gln-247. 2 residues coordinate ADP: Thr-268 and Gly-311. 4 residues coordinate ATP: Thr-268, Gly-311, Gln-315, and Gly-412. Residues Gly-412 and Asn-416 each contribute to the ADP site.

This sequence belongs to the FGGY kinase family.

It catalyses the reaction glycerol + ATP = sn-glycerol 3-phosphate + ADP + H(+). It functions in the pathway polyol metabolism; glycerol degradation via glycerol kinase pathway; sn-glycerol 3-phosphate from glycerol: step 1/1. With respect to regulation, inhibited by fructose 1,6-bisphosphate (FBP). Its function is as follows. Key enzyme in the regulation of glycerol uptake and metabolism. Catalyzes the phosphorylation of glycerol to yield sn-glycerol 3-phosphate. The polypeptide is Glycerol kinase (Aliivibrio fischeri (strain MJ11) (Vibrio fischeri)).